Reading from the N-terminus, the 460-residue chain is Ammonium transporter Rh type B-A (460 aa).

The Cytoplasmic portion of the chain corresponds to 1–10 (MTGYSTNMRI). Residues 11–31 (KLPLFCLILQFITIILFAVFV) form a helical membrane-spanning segment. Over 32–62 (RYDHESDARGWHDELKNHSTANADNDFYFRY) the chain is Extracellular. N-linked (GlcNAc...) asparagine glycosylation occurs at asparagine 48. A helical membrane pass occupies residues 63-83 (PSFQDVHVMIFIGFGFLMTFL). Residues 84-87 (KRYG) are Cytoplasmic-facing. The chain crosses the membrane as a helical span at residues 88–108 (FSSVAFNFLIAAFGLQWSTLI). Residues 109–125 (QGFFHGFHDGKIHVGIE) are Extracellular-facing. A helical transmembrane segment spans residues 126–146 (SMINADFCTGAVLISFGAVLG). At 147-150 (KTSP) the chain is on the cytoplasmic side. The helical transmembrane segment at 151–171 (VQLIVMTLIEVTLFGINEYII) threads the bilayer. At 172–179 (LNIVGAKD) the chain is on the extracellular side. A helical membrane pass occupies residues 180–202 (AGGSMTIHTFGAYFGLIVSRVLY). Residues 203-220 (RADLDKSRQREGSVYHSD) lie on the Cytoplasmic side of the membrane. The helical transmembrane segment at 221-241 (LFAMIGTIYLWMFWPSFNSAV) threads the bilayer. Residues 242–252 (TAHGDDQHRTV) are Extracellular-facing. Residues 253–273 (LNTYYSLAACTLATFGFSALL) form a helical membrane-spanning segment. Residues 274-283 (NGEGKLDMVH) lie on the Cytoplasmic side of the membrane. The helical transmembrane segment at 284–304 (IQNAALAGGVAVGTSGEMMLT) threads the bilayer. Proline 305 is a topological domain (extracellular). The chain crosses the membrane as a helical span at residues 306-326 (FGAMIAGTLAGIVSVLGYKYL). Residues 327-347 (TPVLDSKLKIQDTCGVHNLHG) are Cytoplasmic-facing. The chain crosses the membrane as a helical span at residues 348 to 368 (MPGILGAVIGAIVALFATADI). The Extracellular segment spans residues 369 to 394 (YGDGMDDVFPMIFDGSRTAKQQSLYQ). The chain crosses the membrane as a helical span at residues 395-415 (FLALLVALGFAIVGGTVVGFI). Over 416–460 (LKLPLFGTPSDAECFEDAVYWEVPGGEGHQQLTVVVNNEDPDTQA) the chain is Cytoplasmic.

Belongs to the ammonium transporter (TC 2.A.49) family. Rh subfamily.

The protein localises to the basolateral cell membrane. It localises to the cytoplasmic vesicle membrane. In terms of biological role, functions as a specific ammonium transporter. This Xenopus laevis (African clawed frog) protein is Ammonium transporter Rh type B-A (rhbg-a).